The primary structure comprises 269 residues: Putative biopolymer transport protein ExbD (269 aa).

Topologically, residues 1–40 (MASSPKAPKSHRKFQSIYHPTRPLSLWQDNQHDQGEVRIE) are cytoplasmic. The chain crosses the membrane as a helical span at residues 41–61 (IIPLIDVVFCILTFFILGAVG). Residues 62 to 269 (LSRQQAISLD…GNTVPSAPQQ (208 aa)) lie on the Periplasmic side of the membrane. The disordered stretch occupies residues 190 to 269 (NGANPGMSNF…GNTVPSAPQQ (80 aa)). The span at 193–204 (NPGMSNFNNSNP) shows a compositional bias: low complexity.

Belongs to the ExbD/TolR family.

The protein resides in the cell inner membrane. This Synechocystis sp. (strain ATCC 27184 / PCC 6803 / Kazusa) protein is Putative biopolymer transport protein ExbD.